Consider the following 303-residue polypeptide: Zinc transporter ZIP9-B (303 aa).

Residues 7–27 (ISLLSLAMLVGCYVSGIIPLA) form a helical membrane-spanning segment. N29 carries N-linked (GlcNAc...) asparagine glycosylation. Transmembrane regions (helical) follow at residues 35-55 (LKLV…AVIV), 102-122 (AYIG…DQIG), 142-162 (ITTT…LGAA), 172-192 (LIVF…LVSF), and 206-226 (HLLV…LGLS). An N-linked (GlcNAc...) asparagine glycan is attached at N237. 2 helical membrane-spanning segments follow: residues 240–260 (GVAM…HVLP) and 282–302 (LEVC…IGHQ).

This sequence belongs to the ZIP transporter (TC 2.A.5) family.

The protein localises to the golgi apparatus. It is found in the trans-Golgi network membrane. The protein resides in the cell membrane. It localises to the cytoplasm. Its subcellular location is the perinuclear region. The protein localises to the mitochondrion. It is found in the nucleus. The enzyme catalyses Zn(2+)(in) = Zn(2+)(out). Transports zinc ions across cell and organelle membranes into the cytoplasm and regulates intracellular zinc homeostasis. Participates in the zinc ions efflux out of the secretory compartments. Regulates intracellular zinc level, resulting in the enhancement of AKT1 and MAPK3/MAPK1 (Erk1/2) phosphorylation in response to the BCR activation. Also functions as a membrane androgen receptor that mediates, through a G protein, the non-classical androgen signaling pathway, characterized by the activation of MAPK3/MAPK1 (Erk1/2) and transcription factors CREB1 or ATF1. Moreover, has dual functions as a membrane-bound androgen receptor and as an androgen-dependent zinc transporter both of which are mediated through an inhibitory G protein (Gi) that mediates both MAP kinase and zinc signaling leading to the androgen-dependent apoptotic process. The protein is Zinc transporter ZIP9-B (slc39a9-b) of Xenopus laevis (African clawed frog).